The sequence spans 237 residues: Trypsin-1 (237 aa).

The region spanning 1 to 237 (IVGGTDAVLG…HVDWIKANAV (237 aa)) is the Peptidase S1 domain. A disulfide bond links cysteine 30 and cysteine 46. Histidine 45 functions as the Charge relay system in the catalytic mechanism. Glutamate 64, valine 69, and glutamate 74 together coordinate Ca(2+). The Charge relay system role is filled by aspartate 96. Cystine bridges form between cysteine 159–cysteine 174 and cysteine 185–cysteine 213. The active-site Charge relay system is the serine 189.

The protein belongs to the peptidase S1 family. It depends on Ca(2+) as a cofactor.

It is found in the secreted. It localises to the extracellular space. It carries out the reaction Preferential cleavage: Arg-|-Xaa, Lys-|-Xaa.. The polypeptide is Trypsin-1 (Astacus astacus (Noble crayfish)).